Consider the following 134-residue polypeptide: Large-conductance mechanosensitive channel (134 aa).

The next 2 membrane-spanning stretches (helical) occupy residues 16–36 and 84–104; these read VIDL…VTAL and INTL…IKVI.

This sequence belongs to the MscL family. Homopentamer.

It localises to the cell inner membrane. Channel that opens in response to stretch forces in the membrane lipid bilayer. May participate in the regulation of osmotic pressure changes within the cell. This chain is Large-conductance mechanosensitive channel, found in Stenotrophomonas maltophilia (strain R551-3).